We begin with the raw amino-acid sequence, 213 residues long: Probable nicotinate-nucleotide adenylyltransferase (213 aa).

Residues 194 to 213 are disordered; it reads RKPNNGEAKDGDVKDEEAVR. Over residues 200 to 213 the composition is skewed to basic and acidic residues; the sequence is EAKDGDVKDEEAVR.

Belongs to the NadD family.

The enzyme catalyses nicotinate beta-D-ribonucleotide + ATP + H(+) = deamido-NAD(+) + diphosphate. Its pathway is cofactor biosynthesis; NAD(+) biosynthesis; deamido-NAD(+) from nicotinate D-ribonucleotide: step 1/1. In terms of biological role, catalyzes the reversible adenylation of nicotinate mononucleotide (NaMN) to nicotinic acid adenine dinucleotide (NaAD). This Mycolicibacterium smegmatis (strain ATCC 700084 / mc(2)155) (Mycobacterium smegmatis) protein is Probable nicotinate-nucleotide adenylyltransferase.